A 252-amino-acid polypeptide reads, in one-letter code: Ribosomal RNA small subunit methyltransferase NEP1 (252 aa).

Residues Met-176, Gly-209, Gly-214, and 227–232 (ISNYPL) each bind S-adenosyl-L-methionine.

It belongs to the class IV-like SAM-binding methyltransferase superfamily. RNA methyltransferase NEP1 family. Homodimer. Part of the small subunit (SSU) processome, composed of more than 70 proteins and the RNA chaperone small nucleolar RNA (snoRNA) U3.

It is found in the nucleus. The protein localises to the nucleolus. The catalysed reaction is a pseudouridine in rRNA + S-adenosyl-L-methionine = an N(1)-methylpseudouridine in rRNA + S-adenosyl-L-homocysteine + H(+). S-adenosyl-L-methionine-dependent pseudouridine N(1)-methyltransferase that methylates a pseudouridine in 18S rRNA. Involved the biosynthesis of the hypermodified N1-methyl-N3-(3-amino-3-carboxypropyl) pseudouridine (m1acp3-Psi) conserved in eukaryotic 18S rRNA. Also has an essential role in 40S ribosomal subunit biogenesis independent on its methyltransferase activity, facilitating the incorporation of ribosomal protein S19 during the formation of pre-ribosomes. Functionally, S-adenosyl-L-methionine-dependent pseudouridine N(1)-methyltransferase that methylates pseudouridine at position in 18S rRNA. Involved the biosynthesis of the hypermodified N1-methyl-N3-(3-amino-3-carboxypropyl) pseudouridine (m1acp3-Psi) conserved in eukaryotic 18S rRNA. Is not able to methylate uridine at this position. Also has an essential role in 40S ribosomal subunit biogenesis independent on its methyltransferase activity, facilitating the incorporation of ribosomal protein S19 during the formation of pre-ribosomes. Part of the small subunit (SSU) processome, first precursor of the small eukaryotic ribosomal subunit. During the assembly of the SSU processome in the nucleolus, many ribosome biogenesis factors, an RNA chaperone and ribosomal proteins associate with the nascent pre-rRNA and work in concert to generate RNA folding, modifications, rearrangements and cleavage as well as targeted degradation of pre-ribosomal RNA by the RNA exosome. The sequence is that of Ribosomal RNA small subunit methyltransferase NEP1 from Drosophila melanogaster (Fruit fly).